The chain runs to 24 residues: Frenatin-4 (24 aa).

In terms of tissue distribution, expressed by the skin glands.

The protein localises to the secreted. Its function is as follows. Very weak antimicrobial peptide since it does not show activity below 100 ug/ml against Bacillus cereus, Escherichia coli, Leuconostoc mesenteroides, Micrococcus luteus, Pastewella haemolytica, Staphylococcus aureus, Streptococcus faecalis and Streptococcus uberis. In Nyctimystes infrafrenatus (White-lipped tree frog), this protein is Frenatin-4.